Consider the following 341-residue polypeptide: MQKSYSLQELATQIGATVRGNTDVVVENIAPLDKAQSNQLTFISNVKFRVLLKDSKAGILIVSEEDVEHCSPESNLLIVKDPYVAYAILAQYMDSTPKAAQGIAKSAVIFDGVLLGENVSIGANAVIEEGVVLGDNVIIGANCFVGKNTKIGSGTQLWANVTVYHNVEIGANCLIQSGTVIGSDGFGYANDRGRWIKIPQVGQVIIGNNVEIGANTCIDRGALDATIIEDNVIIDNLCQIAHNVHIGTGTAVAGGVIMAGSLTVGRYCLIGGASVINGHMEICDKVTITGMGMVMRPITEPGVYSSGIPLQTNKEWRKTAALTLGIDGINKRLKALEKKIS.

H242 serves as the catalytic Proton acceptor.

This sequence belongs to the transferase hexapeptide repeat family. LpxD subfamily. As to quaternary structure, homotrimer.

It carries out the reaction a UDP-3-O-[(3R)-3-hydroxyacyl]-alpha-D-glucosamine + a (3R)-hydroxyacyl-[ACP] = a UDP-2-N,3-O-bis[(3R)-3-hydroxyacyl]-alpha-D-glucosamine + holo-[ACP] + H(+). It participates in bacterial outer membrane biogenesis; LPS lipid A biosynthesis. Functionally, catalyzes the N-acylation of UDP-3-O-acylglucosamine using 3-hydroxyacyl-ACP as the acyl donor. Is involved in the biosynthesis of lipid A, a phosphorylated glycolipid that anchors the lipopolysaccharide to the outer membrane of the cell. This is UDP-3-O-acylglucosamine N-acyltransferase from Haemophilus influenzae (strain ATCC 51907 / DSM 11121 / KW20 / Rd).